The chain runs to 655 residues: p-hydroxybenzoic acid efflux pump subunit AaeB (655 aa).

A run of 11 helical transmembrane segments spans residues 13–33, 38–58, 67–89, 93–112, 121–141, 152–172, 370–390, 407–427, 431–451, 459–479, and 482–502; these read FAVKLATAIVLALFVGFHFQL, WAVLTAAIVAAGPAFAAGGEP, GFLRIIGTFIGCIAGLVIIIAMI, LLMILVCCIWAGFCTWISSL, WGLAGYTALIIVITIQPEPLL, EIVIGIVCAIMADLLFSPRSI, LFWLWTGWTSGSGAMVMIAVV, FIYGTLAALPLGLLYFLVIIP, QSMLLLCISLAVLGFFLGIEV, MGALASTINIIVLDNPMTFHF, and FLDSALGQIVGCVLAFTVILL.

This sequence belongs to the aromatic acid exporter ArAE (TC 2.A.85) family.

The protein resides in the cell inner membrane. Functionally, forms an efflux pump with AaeA. Could function as a metabolic relief valve, allowing to eliminate certain compounds when they accumulate to high levels in the cell. The polypeptide is p-hydroxybenzoic acid efflux pump subunit AaeB (Escherichia coli O9:H4 (strain HS)).